Reading from the N-terminus, the 199-residue chain is NAD(P)H-quinone oxidoreductase chain 6 (199 aa).

A run of 5 helical transmembrane segments spans residues 9–29, 32–52, 61–81, 102–122, and 143–163; these read IVSF…VVLL, VVYS…LYLL, AQVL…IMLV, LVCA…PWAI, and FLLP…GAIV.

This sequence belongs to the complex I subunit 6 family.

The protein localises to the membrane. It catalyses the reaction a plastoquinone + NADH + (n+1) H(+)(in) = a plastoquinol + NAD(+) + n H(+)(out). It carries out the reaction a plastoquinone + NADPH + (n+1) H(+)(in) = a plastoquinol + NADP(+) + n H(+)(out). In terms of biological role, NDH-1 shuttles electrons from NAD(P)H, via FMN and iron-sulfur (Fe-S) centers, to quinones in the respiratory chain. The immediate electron acceptor for the enzyme in this species is believed to be plastoquinone. Couples the redox reaction to proton translocation (for every two electrons transferred, four hydrogen ions are translocated across the cytoplasmic membrane), and thus conserves the redox energy in a proton gradient. The chain is NAD(P)H-quinone oxidoreductase chain 6 (ndhG) from Leptolyngbya boryana (Plectonema boryanum).